Here is a 452-residue protein sequence, read N- to C-terminus: Ribosomal protein uS12 methylthiotransferase RimO (452 aa).

One can recognise an MTTase N-terminal domain in the interval 8 to 123 (PRVGFVSLGC…VMQAVHTHLP (116 aa)). [4Fe-4S] cluster is bound by residues cysteine 17, cysteine 53, cysteine 82, cysteine 154, cysteine 158, and cysteine 161. The region spanning 140-381 (LTPKHYAYLK…MEVAEEVSAR (242 aa)) is the Radical SAM core domain. Residues 384–452 (QRKVGQTLRV…ADGHDLWGEI (69 aa)) enclose the TRAM domain.

Belongs to the methylthiotransferase family. RimO subfamily. [4Fe-4S] cluster serves as cofactor.

The protein resides in the cytoplasm. The catalysed reaction is L-aspartate(89)-[ribosomal protein uS12]-hydrogen + (sulfur carrier)-SH + AH2 + 2 S-adenosyl-L-methionine = 3-methylsulfanyl-L-aspartate(89)-[ribosomal protein uS12]-hydrogen + (sulfur carrier)-H + 5'-deoxyadenosine + L-methionine + A + S-adenosyl-L-homocysteine + 2 H(+). In terms of biological role, catalyzes the methylthiolation of an aspartic acid residue of ribosomal protein uS12. The polypeptide is Ribosomal protein uS12 methylthiotransferase RimO (Cupriavidus pinatubonensis (strain JMP 134 / LMG 1197) (Cupriavidus necator (strain JMP 134))).